Reading from the N-terminus, the 297-residue chain is Vacuolar protein sorting-associated protein 26C (297 aa).

This sequence belongs to the VPS26 family. Component of the commander complex that is essential for endosomal recycling of transmembrane cargos; the commander complex is composed of the CCC subcomplex and the retriever subcomplex. Component of the heterotrimeric retriever complex consisting of VPS26C, VPS29 and VPS35L; within the complex interacts with VPS35L. Interacts with SNX17 (via C-terminus); the interaction is direct and associates SNX17 with the retriever complex. Interacts with SNX31; the interaction is direct.

It is found in the endosome. Functionally, component of the commander complex that is essential for endosomal recycling of transmembrane cargos; the commander complex is composed of the CCC subcomplex and the retriever subcomplex. Component of the retriever complex, which is a heterotrimeric complex related to retromer cargo-selective complex (CSC) and essential for retromer-independent retrieval and recycling of numerous cargos such as integrin alpha-5/beta-1 (ITGA5:ITGB1). The recruitment of the retriever complex to the endosomal membrane involves CCC and WASH complexes. In the endosomes, drives the retriever and recycling of NxxY-motif-containing cargo proteins by coupling to SNX17, a cargo essential for the homeostatic maintenance of numerous cell surface proteins associated with processes that include cell migration, cell adhesion, nutrient supply and cell signaling. This is Vacuolar protein sorting-associated protein 26C (VPS26C) from Pongo abelii (Sumatran orangutan).